We begin with the raw amino-acid sequence, 102 residues long: Co-chaperonin GroES (102 aa).

Belongs to the GroES chaperonin family. In terms of assembly, heptamer of 7 subunits arranged in a ring. Interacts with the chaperonin GroEL.

Its subcellular location is the cytoplasm. Together with the chaperonin GroEL, plays an essential role in assisting protein folding. The GroEL-GroES system forms a nano-cage that allows encapsulation of the non-native substrate proteins and provides a physical environment optimized to promote and accelerate protein folding. GroES binds to the apical surface of the GroEL ring, thereby capping the opening of the GroEL channel. This Streptomyces albus G protein is Co-chaperonin GroES.